Reading from the N-terminus, the 520-residue chain is Arabinose import ATP-binding protein AraG (520 aa).

Polar residues predominate over residues 1–10 (MTTQTMTAVS). The segment at 1–27 (MTTQTMTAVSGNDGDTGGDAAESPPGG) is disordered. ABC transporter domains are found at residues 30–265 (LALD…MVGR) and 265–516 (RSIE…LIKL). 62-69 (GENGAGKS) contacts ATP.

It belongs to the ABC transporter superfamily. Arabinose importer (TC 3.A.1.2.2) family. The complex is composed of two ATP-binding proteins (AraG), two transmembrane proteins (AraH) and a solute-binding protein (AraF).

It localises to the cell inner membrane. The enzyme catalyses L-arabinose(out) + ATP + H2O = L-arabinose(in) + ADP + phosphate + H(+). In terms of biological role, part of the ABC transporter complex AraFGH involved in L-arabinose import. Responsible for energy coupling to the transport system. This Azospirillum brasilense protein is Arabinose import ATP-binding protein AraG.